Consider the following 295-residue polypeptide: Ethanolamine ammonia-lyase small subunit (295 aa).

Adenosylcob(III)alamin-binding residues include Val207, Glu228, and Cys258.

The protein belongs to the EutC family. In terms of assembly, the basic unit is a heterodimer which dimerizes to form tetramers. The heterotetramers trimerize; 6 large subunits form a core ring with 6 small subunits projecting outwards. Requires adenosylcob(III)alamin as cofactor.

The protein resides in the bacterial microcompartment. The catalysed reaction is ethanolamine = acetaldehyde + NH4(+). Its pathway is amine and polyamine degradation; ethanolamine degradation. Catalyzes the deamination of various vicinal amino-alcohols to oxo compounds. Allows this organism to utilize ethanolamine as the sole source of nitrogen and carbon in the presence of external vitamin B12. This chain is Ethanolamine ammonia-lyase small subunit, found in Escherichia coli (strain SE11).